Reading from the N-terminus, the 366-residue chain is Beta-1,3-glucan-binding protein (366 aa).

The N-terminal stretch at 1–17 (MKGFVASVVLLACGALA) is a signal peptide. Residues 18–364 (ADIVEPEDCT…YVRVWKMEST (347 aa)) form the GH16 domain. N-linked (GlcNAc...) asparagine glycosylation is present at Asn-66.

It belongs to the glycosyl hydrolase 16 family. As to expression, constitutively expressed in hemocytes.

The protein localises to the secreted. Binds to beta-1,3-glucan. May play a role in recognition of microorganisms and in activation of the prophenoloxidase cascade. This is Beta-1,3-glucan-binding protein from Penaeus monodon (Giant tiger prawn).